Here is a 92-residue protein sequence, read N- to C-terminus: Small ribosomal subunit protein uS19 (92 aa).

The protein belongs to the universal ribosomal protein uS19 family.

Functionally, protein S19 forms a complex with S13 that binds strongly to the 16S ribosomal RNA. The chain is Small ribosomal subunit protein uS19 from Prochlorococcus marinus (strain MIT 9301).